A 309-amino-acid chain; its full sequence is Taste receptor type 2 member 8 (309 aa).

The Extracellular segment spans residues 1 to 7; the sequence is MFSPADN. Residues 8-28 form a helical membrane-spanning segment; that stretch reads IFIILITGEFILGILGNGYIA. Residues 29-50 lie on the Cytoplasmic side of the membrane; it reads LVNWIDWIKKKKISTIDYILTN. The helical transmembrane segment at 51–71 threads the bilayer; that stretch reads LVISRICLISVMVVNGIVIAV. Residues 72–82 lie on the Extracellular side of the membrane; it reads YPDVYTKSKLQ. Residues 83 to 103 form a helical membrane-spanning segment; that stretch reads IAICTFWTFANYLNMWITTCL. The Cytoplasmic segment spans residues 104-131; that stretch reads NVFYFLKIANSSHPLFLWLKQKIDMVVR. Residues 132–152 traverse the membrane as a helical segment; it reads WILLGCFAISLLVSLIAAIVL. The Extracellular portion of the chain corresponds to 153–184; it reads SYDYRFHAIAKHKRNITEMFHVSKRPYFEPLT. Asn167 carries N-linked (GlcNAc...) asparagine glycosylation. A helical membrane pass occupies residues 185–205; it reads LFNLFAIVPFIVSLISFFLLV. The Cytoplasmic segment spans residues 206–239; that stretch reads RSLWRHTKQIKLYATGGRDPSTEVHVRAIKTMTS. The helical transmembrane segment at 240-260 threads the bilayer; that stretch reads FIFLFFLYYISSILVTFSYLM. The Extracellular portion of the chain corresponds to 261–266; it reads TKYKLA. The helical transmembrane segment at 267 to 287 threads the bilayer; it reads VEFGEIVAILYPLGHSLILIV. At 288–309 the chain is on the cytoplasmic side; it reads LNNKLRQTFVRMLTCRKIACVI.

Belongs to the G-protein coupled receptor T2R family.

The protein resides in the membrane. Its function is as follows. Receptor that may play a role in the perception of bitterness and is gustducin-linked. May play a role in sensing the chemical composition of the gastrointestinal content. The activity of this receptor may stimulate alpha gustducin, mediate PLC-beta-2 activation and lead to the gating of TRPM5. The polypeptide is Taste receptor type 2 member 8 (TAS2R8) (Gorilla gorilla gorilla (Western lowland gorilla)).